A 246-amino-acid chain; its full sequence is 1-(5-phosphoribosyl)-5-[(5-phosphoribosylamino)methylideneamino] imidazole-4-carboxamide isomerase (246 aa).

Asp-12 serves as the catalytic Proton acceptor. Asp-134 (proton donor) is an active-site residue.

The protein belongs to the HisA/HisF family.

Its subcellular location is the cytoplasm. The enzyme catalyses 1-(5-phospho-beta-D-ribosyl)-5-[(5-phospho-beta-D-ribosylamino)methylideneamino]imidazole-4-carboxamide = 5-[(5-phospho-1-deoxy-D-ribulos-1-ylimino)methylamino]-1-(5-phospho-beta-D-ribosyl)imidazole-4-carboxamide. It participates in amino-acid biosynthesis; L-histidine biosynthesis; L-histidine from 5-phospho-alpha-D-ribose 1-diphosphate: step 4/9. The chain is 1-(5-phosphoribosyl)-5-[(5-phosphoribosylamino)methylideneamino] imidazole-4-carboxamide isomerase from Psychrobacter cryohalolentis (strain ATCC BAA-1226 / DSM 17306 / VKM B-2378 / K5).